We begin with the raw amino-acid sequence, 440 residues long: Ribosomal protein uS12 methylthiotransferase RimO (440 aa).

The MTTase N-terminal domain maps to lysine 2 to glutamate 118. 6 residues coordinate [4Fe-4S] cluster: cysteine 11, cysteine 47, cysteine 81, cysteine 154, cysteine 158, and cysteine 161. A Radical SAM core domain is found at isoleucine 140–lysine 370. The TRAM domain occupies alanine 373 to valine 440.

Belongs to the methylthiotransferase family. RimO subfamily. The cofactor is [4Fe-4S] cluster.

It localises to the cytoplasm. It carries out the reaction L-aspartate(89)-[ribosomal protein uS12]-hydrogen + (sulfur carrier)-SH + AH2 + 2 S-adenosyl-L-methionine = 3-methylsulfanyl-L-aspartate(89)-[ribosomal protein uS12]-hydrogen + (sulfur carrier)-H + 5'-deoxyadenosine + L-methionine + A + S-adenosyl-L-homocysteine + 2 H(+). Functionally, catalyzes the methylthiolation of an aspartic acid residue of ribosomal protein uS12. The protein is Ribosomal protein uS12 methylthiotransferase RimO of Dictyoglomus thermophilum (strain ATCC 35947 / DSM 3960 / H-6-12).